The following is a 179-amino-acid chain: Large ribosomal subunit protein uL6 (179 aa).

It belongs to the universal ribosomal protein uL6 family. In terms of assembly, part of the 50S ribosomal subunit.

Its function is as follows. This protein binds to the 23S rRNA, and is important in its secondary structure. It is located near the subunit interface in the base of the L7/L12 stalk, and near the tRNA binding site of the peptidyltransferase center. This Syntrophomonas wolfei subsp. wolfei (strain DSM 2245B / Goettingen) protein is Large ribosomal subunit protein uL6.